The chain runs to 1026 residues: Multidrug resistance protein MdtC (1026 aa).

12 consecutive transmembrane segments (helical) span residues 12–32 (VATL…FRLL), 333–353 (EVEQ…FLFL), 360–380 (AIPA…MYLC), 387–407 (LSLM…IVVL), 431–451 (VGFT…PLLL), 463–483 (FAVT…TLTP), 528–548 (WVLL…ISIP), 853–873 (LLLI…LYES), 875–895 (VHPL…LLAL), 897–917 (WFGA…IGIV), 953–973 (PIMM…LTSG), and 984–1004 (ITIV…TPVV).

The protein belongs to the resistance-nodulation-cell division (RND) (TC 2.A.6) family. MdtC subfamily. As to quaternary structure, part of a tripartite efflux system composed of MdtA, MdtB and MdtC. MdtC forms a heteromultimer with MdtB.

It is found in the cell inner membrane. The chain is Multidrug resistance protein MdtC from Pectobacterium carotovorum subsp. carotovorum (strain PC1).